The chain runs to 279 residues: MSGRVTARRRVVRLTPAGEIRRQDTLAVEEPLEIRIGGQSLTVTMRTPGSDIDLVHGFLLSENMIGAAEDVVSARYCAGTDEQGRNTYNVLDVELRRPVPVRTRHVLTTGACGLCGKTALDEVRAVTRFPLPAHGVTLAADVLADLPATLRAGQSVFQATGGLHAAGLFTVDGTPLAVREDIGRHNAVDKVIGWALRENRVPAHELVLIVSGRASFELVQKAVMAGIPILGAVSAPSSLAVDLAEEAGLTLVGFLRGETMNVYSGAHRLRSVSAGTRTA.

Cys-112 (cysteine persulfide intermediate) is an active-site residue.

It belongs to the FdhD family.

Its subcellular location is the cytoplasm. Required for formate dehydrogenase (FDH) activity. Acts as a sulfur carrier protein that transfers sulfur from IscS to the molybdenum cofactor prior to its insertion into FDH. The sequence is that of Sulfur carrier protein FdhD from Nocardia farcinica (strain IFM 10152).